The sequence spans 242 residues: Ribose-5-phosphate isomerase A (242 aa).

Substrate is bound by residues 39 to 42 (SGST), 95 to 98 (DGAD), and 108 to 111 (KGGG). The Proton acceptor role is filled by Glu117. Substrate is bound at residue Lys135.

This sequence belongs to the ribose 5-phosphate isomerase family. As to quaternary structure, homodimer.

The enzyme catalyses aldehydo-D-ribose 5-phosphate = D-ribulose 5-phosphate. It participates in carbohydrate degradation; pentose phosphate pathway; D-ribose 5-phosphate from D-ribulose 5-phosphate (non-oxidative stage): step 1/1. Catalyzes the reversible conversion of ribose-5-phosphate to ribulose 5-phosphate. The sequence is that of Ribose-5-phosphate isomerase A from Chlamydia trachomatis serovar L2 (strain ATCC VR-902B / DSM 19102 / 434/Bu).